Here is a 186-residue protein sequence, read N- to C-terminus: Transcription factor FapR (186 aa).

Belongs to the FapR family.

Transcriptional factor involved in regulation of membrane lipid biosynthesis by repressing genes involved in fatty acid and phospholipid metabolism. The polypeptide is Transcription factor FapR (Staphylococcus epidermidis (strain ATCC 35984 / DSM 28319 / BCRC 17069 / CCUG 31568 / BM 3577 / RP62A)).